The following is a 148-amino-acid chain: D-aminoacyl-tRNA deacylase (148 aa).

The Gly-cisPro motif, important for rejection of L-amino acids signature appears at 136 to 137 (GP).

The protein belongs to the DTD family. In terms of assembly, homodimer.

Its subcellular location is the cytoplasm. It catalyses the reaction glycyl-tRNA(Ala) + H2O = tRNA(Ala) + glycine + H(+). The catalysed reaction is a D-aminoacyl-tRNA + H2O = a tRNA + a D-alpha-amino acid + H(+). Functionally, an aminoacyl-tRNA editing enzyme that deacylates mischarged D-aminoacyl-tRNAs. Also deacylates mischarged glycyl-tRNA(Ala), protecting cells against glycine mischarging by AlaRS. Acts via tRNA-based rather than protein-based catalysis; rejects L-amino acids rather than detecting D-amino acids in the active site. By recycling D-aminoacyl-tRNA to D-amino acids and free tRNA molecules, this enzyme counteracts the toxicity associated with the formation of D-aminoacyl-tRNA entities in vivo and helps enforce protein L-homochirality. The chain is D-aminoacyl-tRNA deacylase from Kosmotoga olearia (strain ATCC BAA-1733 / DSM 21960 / TBF 19.5.1).